A 531-amino-acid chain; its full sequence is ATP synthase subunit beta (531 aa).

The interval 1–48 (MVKAVTSSKETAKVEKKKSAPRSGVKKAVSKSQAGVKDSSSPVHKSSK) is disordered. Residues 19–29 (SAPRSGVKKAV) are compositionally biased toward basic residues. Polar residues predominate over residues 30–44 (SKSQAGVKDSSSPVH). 203 to 210 (GGAGVGKT) serves as a coordination point for ATP.

Belongs to the ATPase alpha/beta chains family. As to quaternary structure, F-type ATPases have 2 components, CF(1) - the catalytic core - and CF(0) - the membrane proton channel. CF(1) has five subunits: alpha(3), beta(3), gamma(1), delta(1), epsilon(1). CF(0) has three main subunits: a(1), b(2) and c(9-12). The alpha and beta chains form an alternating ring which encloses part of the gamma chain. CF(1) is attached to CF(0) by a central stalk formed by the gamma and epsilon chains, while a peripheral stalk is formed by the delta and b chains.

The protein localises to the cell inner membrane. The enzyme catalyses ATP + H2O + 4 H(+)(in) = ADP + phosphate + 5 H(+)(out). Produces ATP from ADP in the presence of a proton gradient across the membrane. The catalytic sites are hosted primarily by the beta subunits. The sequence is that of ATP synthase subunit beta from Bartonella henselae (strain ATCC 49882 / DSM 28221 / CCUG 30454 / Houston 1) (Rochalimaea henselae).